The primary structure comprises 150 residues: Heavy metal-associated isoprenylated plant protein 24 (150 aa).

Positions 26 to 89 constitute an HMA domain; sequence QTVALRVARI…AAKSTKKKVE (64 aa). 2 residues coordinate a metal cation: Cys37 and Cys40. Position 147 is a cysteine methyl ester (Cys147). The S-farnesyl cysteine moiety is linked to residue Cys147. Positions 148–150 are cleaved as a propeptide — removed in mature form; the sequence is AIM.

Belongs to the HIPP family. In terms of assembly, interacts with ZHD11/HB29.

Functionally, heavy-metal-binding protein. The sequence is that of Heavy metal-associated isoprenylated plant protein 24 from Arabidopsis thaliana (Mouse-ear cress).